The following is a 59-amino-acid chain: UPF0434 protein VS_2060 (59 aa).

The protein belongs to the UPF0434 family.

In Vibrio atlanticus (strain LGP32) (Vibrio splendidus (strain Mel32)), this protein is UPF0434 protein VS_2060.